Reading from the N-terminus, the 389-residue chain is 1-deoxy-D-xylulose 5-phosphate reductoisomerase (389 aa).

The NADPH site is built by S11, G12, S13, V14, N39, and N122. A 1-deoxy-D-xylulose 5-phosphate-binding site is contributed by K123. E124 is a binding site for NADPH. D148 serves as a coordination point for Mn(2+). 1-deoxy-D-xylulose 5-phosphate contacts are provided by S149, E150, S174, and H197. A Mn(2+)-binding site is contributed by E150. Residue G203 participates in NADPH binding. 4 residues coordinate 1-deoxy-D-xylulose 5-phosphate: S210, N215, K216, and E219. Residue E219 coordinates Mn(2+).

It belongs to the DXR family. The cofactor is Mg(2+). Mn(2+) serves as cofactor.

The enzyme catalyses 2-C-methyl-D-erythritol 4-phosphate + NADP(+) = 1-deoxy-D-xylulose 5-phosphate + NADPH + H(+). The protein operates within isoprenoid biosynthesis; isopentenyl diphosphate biosynthesis via DXP pathway; isopentenyl diphosphate from 1-deoxy-D-xylulose 5-phosphate: step 1/6. Its function is as follows. Catalyzes the NADPH-dependent rearrangement and reduction of 1-deoxy-D-xylulose-5-phosphate (DXP) to 2-C-methyl-D-erythritol 4-phosphate (MEP). This Leptospira interrogans serogroup Icterohaemorrhagiae serovar Lai (strain 56601) protein is 1-deoxy-D-xylulose 5-phosphate reductoisomerase.